The primary structure comprises 397 residues: GPI mannosyltransferase 1 (397 aa).

The next 9 membrane-spanning stretches (helical) occupy residues 5-25, 79-99, 111-128, 156-176, 193-213, 257-277, 307-327, 330-350, and 362-382; these read ECLL…YGIY, WVHF…VMVM, LILA…TVST, GFVY…ALPI, LTMG…MYYI, WAEF…YVLW, YFIW…LSGA, IFLI…GYLL, and LFSA…QFIL.

Belongs to the PIGM family.

The protein localises to the endoplasmic reticulum membrane. It functions in the pathway glycolipid biosynthesis; glycosylphosphatidylinositol-anchor biosynthesis. Mannosyltransferase involved in glycosylphosphatidylinositol-anchor biosynthesis. Transfers the first alpha-1,4-mannose to GlcN-acyl-PI during GPI precursor assembly. Required for cell wall integrity. The sequence is that of GPI mannosyltransferase 1 (GPI14) from Eremothecium gossypii (strain ATCC 10895 / CBS 109.51 / FGSC 9923 / NRRL Y-1056) (Yeast).